A 447-amino-acid chain; its full sequence is Argininosuccinate synthase (447 aa).

Residues 17-25 and A43 each bind ATP; that span reads AFSGGLDTS. Y99 is a binding site for L-citrulline. 2 residues coordinate ATP: G129 and T131. T131, N135, and D136 together coordinate L-aspartate. N135 is a binding site for L-citrulline. D136 lines the ATP pocket. Residues R139 and S192 each contribute to the L-citrulline site. D194 is a binding site for ATP. 3 residues coordinate L-citrulline: T201, E203, and E280.

It belongs to the argininosuccinate synthase family. Type 2 subfamily. As to quaternary structure, homotetramer.

The protein resides in the cytoplasm. The catalysed reaction is L-citrulline + L-aspartate + ATP = 2-(N(omega)-L-arginino)succinate + AMP + diphosphate + H(+). Its pathway is amino-acid biosynthesis; L-arginine biosynthesis; L-arginine from L-ornithine and carbamoyl phosphate: step 2/3. This Klebsiella pneumoniae subsp. pneumoniae (strain ATCC 700721 / MGH 78578) protein is Argininosuccinate synthase.